An 81-amino-acid chain; its full sequence is Large ribosomal subunit protein bL31B (81 aa).

Belongs to the bacterial ribosomal protein bL31 family. Type B subfamily. In terms of assembly, part of the 50S ribosomal subunit.

The sequence is that of Large ribosomal subunit protein bL31B from Limosilactobacillus reuteri (strain DSM 20016) (Lactobacillus reuteri).